The following is an 871-amino-acid chain: Bifunctional cordycepin biosynthesis cluster protein 3 (871 aa).

The protein operates within secondary metabolite biosynthesis. Nucleoside/nucleotide kinase; part of the gene cluster that mediates the biosynthesis of cordycepin (COR) and pentostatin (PTN), two adenosine analogs with related bioactivity profiles as both mimic adenosine and can inhibit some of the processes that are adenosine dependent. Within the pathway, cns3 catalyzes both the first step of cordycepin biosynthesis by phosphorylating adenosine into 3'-AMP via its kinase activity and the conversion of adenosine into pentostatin via its ATP phosphoribosyltransferase activity. The first step of cordycepin biosynthesis involves hydroxyl phosphorylation of the 3'-OH position on adenosine to produce adenosine-3'-monophosphate (3'-AMP), catalyzed by kinase activity of cns3. Next, 3'-AMP is dephosphorylated to 2'-carbonyl-3'-deoxyadenosine (2'-C-3'-dA) by cns2, which is finally converted to cordycepin (3'-deoxyadenosine) by the oxidoreductase cns1. This is Bifunctional cordycepin biosynthesis cluster protein 3 from Cordyceps militaris (strain CM01) (Caterpillar fungus).